Reading from the N-terminus, the 282-residue chain is Pantothenate synthetase (282 aa).

30–37 (MGYLHEGH) is an ATP binding site. His-37 (proton donor) is an active-site residue. Gln-61 contacts (R)-pantoate. Gln-61 serves as a coordination point for beta-alanine. Residue 147–150 (GMKD) participates in ATP binding. Residue Gln-153 coordinates (R)-pantoate. Residues Val-176 and 184–187 (KSSR) contribute to the ATP site.

The protein belongs to the pantothenate synthetase family. Homodimer.

Its subcellular location is the cytoplasm. The enzyme catalyses (R)-pantoate + beta-alanine + ATP = (R)-pantothenate + AMP + diphosphate + H(+). The protein operates within cofactor biosynthesis; (R)-pantothenate biosynthesis; (R)-pantothenate from (R)-pantoate and beta-alanine: step 1/1. Its function is as follows. Catalyzes the condensation of pantoate with beta-alanine in an ATP-dependent reaction via a pantoyl-adenylate intermediate. This is Pantothenate synthetase from Bacillus cereus (strain ATCC 10987 / NRS 248).